A 248-amino-acid polypeptide reads, in one-letter code: 4-hydroxy-tetrahydrodipicolinate reductase (248 aa).

Residues 9–14, 77–79, and 104–107 contribute to the NAD(+) site; these read GAKGRV, GTT, and APNF. Catalysis depends on histidine 134, which acts as the Proton donor/acceptor. (S)-2,3,4,5-tetrahydrodipicolinate is bound at residue histidine 135. The active-site Proton donor is the lysine 138. 144–145 is a binding site for (S)-2,3,4,5-tetrahydrodipicolinate; it reads GT.

Belongs to the DapB family.

It is found in the cytoplasm. The catalysed reaction is (S)-2,3,4,5-tetrahydrodipicolinate + NAD(+) + H2O = (2S,4S)-4-hydroxy-2,3,4,5-tetrahydrodipicolinate + NADH + H(+). It carries out the reaction (S)-2,3,4,5-tetrahydrodipicolinate + NADP(+) + H2O = (2S,4S)-4-hydroxy-2,3,4,5-tetrahydrodipicolinate + NADPH + H(+). Its pathway is amino-acid biosynthesis; L-lysine biosynthesis via DAP pathway; (S)-tetrahydrodipicolinate from L-aspartate: step 4/4. Its function is as follows. Catalyzes the conversion of 4-hydroxy-tetrahydrodipicolinate (HTPA) to tetrahydrodipicolinate. The sequence is that of 4-hydroxy-tetrahydrodipicolinate reductase from Corynebacterium efficiens (strain DSM 44549 / YS-314 / AJ 12310 / JCM 11189 / NBRC 100395).